The primary structure comprises 787 residues: Phenylalanine--tRNA ligase beta subunit (787 aa).

One can recognise a tRNA-binding domain in the interval 38 to 151 (GQDPAPFVVA…SDYEVGDSFF (114 aa)). Residues 397–474 (SEGRVISFNP…RMHGYDKVQE (78 aa)) form the B5 domain. Mg(2+) contacts are provided by Asp452, Asp458, Glu461, and Glu462. The region spanning 694–785 (HKYQPVKRDF…VAQKLGGELR (92 aa)) is the FDX-ACB domain.

The protein belongs to the phenylalanyl-tRNA synthetase beta subunit family. Type 1 subfamily. Tetramer of two alpha and two beta subunits. Mg(2+) is required as a cofactor.

Its subcellular location is the cytoplasm. It carries out the reaction tRNA(Phe) + L-phenylalanine + ATP = L-phenylalanyl-tRNA(Phe) + AMP + diphosphate + H(+). The polypeptide is Phenylalanine--tRNA ligase beta subunit (Anaplasma marginale (strain St. Maries)).